A 645-amino-acid chain; its full sequence is Phosphomethylpyrimidine synthase (645 aa).

Residues 1 to 12 (MSHNTVIPTTDI) show a composition bias toward polar residues. Positions 1–25 (MSHNTVIPTTDISPKPDPARPRKAQ) are disordered. Residues asparagine 253, methionine 282, tyrosine 311, histidine 347, 367–369 (SRG), 408–411 (DGLR), and glutamate 447 each bind substrate. Histidine 451 lines the Zn(2+) pocket. Position 474 (tyrosine 474) interacts with substrate. Histidine 515 serves as a coordination point for Zn(2+). Residues cysteine 595, cysteine 598, and cysteine 603 each coordinate [4Fe-4S] cluster.

The protein belongs to the ThiC family. In terms of assembly, homodimer. [4Fe-4S] cluster is required as a cofactor.

It catalyses the reaction 5-amino-1-(5-phospho-beta-D-ribosyl)imidazole + S-adenosyl-L-methionine = 4-amino-2-methyl-5-(phosphooxymethyl)pyrimidine + CO + 5'-deoxyadenosine + formate + L-methionine + 3 H(+). Its pathway is cofactor biosynthesis; thiamine diphosphate biosynthesis. Catalyzes the synthesis of the hydroxymethylpyrimidine phosphate (HMP-P) moiety of thiamine from aminoimidazole ribotide (AIR) in a radical S-adenosyl-L-methionine (SAM)-dependent reaction. The polypeptide is Phosphomethylpyrimidine synthase (Photorhabdus laumondii subsp. laumondii (strain DSM 15139 / CIP 105565 / TT01) (Photorhabdus luminescens subsp. laumondii)).